A 196-amino-acid polypeptide reads, in one-letter code: Rac-like GTP-binding protein RAC13 (196 aa).

13 to 20 serves as a coordination point for GTP; the sequence is GDGAVGKT. Residues 35 to 43 carry the Effector region motif; it reads YVPTVFDNF. GTP-binding positions include 60–64 and 118–121; these read DTAGQ and TKLD. C193 carries the post-translational modification Cysteine methyl ester. A lipid anchor (S-geranylgeranyl cysteine) is attached at C193. A propeptide spans 194 to 196 (removed in mature form); it reads AFL.

The protein belongs to the small GTPase superfamily. Rho family.

The protein localises to the cytoplasm. Its subcellular location is the membrane. Functionally, could participate in a signal transduction pathway that controls cytoskeletal organization. In terms of biological role, inactive GDP-bound Rho GTPases reside in the cytosol, are found in a complex with Rho GDP-dissociation inhibitors (Rho GDIs), and are released from the GDI protein in order to translocate to membranes upon activation. In Gossypium hirsutum (Upland cotton), this protein is Rac-like GTP-binding protein RAC13 (RAC13).